The sequence spans 73 residues: uncharacterized protein (73 aa).

This is an uncharacterized protein from Homo sapiens (Human).